A 386-amino-acid polypeptide reads, in one-letter code: S-(hydroxymethyl)glutathione dehydrogenase (386 aa).

S2 is subject to N-acetylserine. C49 contacts Zn(2+). H50 is an NAD(+) binding site. Residues H71, E72, C101, C104, C107, C115, and C179 each coordinate Zn(2+). Residues 204 to 209 (GCGTVG), D228, 300 to 302 (IGV), and 325 to 327 (SAF) each bind NAD(+).

This sequence belongs to the zinc-containing alcohol dehydrogenase family. Class-III subfamily. It depends on Zn(2+) as a cofactor.

The protein localises to the cytoplasm. It is found in the mitochondrion. It carries out the reaction a primary alcohol + NAD(+) = an aldehyde + NADH + H(+). The enzyme catalyses a secondary alcohol + NAD(+) = a ketone + NADH + H(+). The catalysed reaction is S-(hydroxymethyl)glutathione + NADP(+) = S-formylglutathione + NADPH + H(+). It catalyses the reaction S-(hydroxymethyl)glutathione + NAD(+) = S-formylglutathione + NADH + H(+). It carries out the reaction S-nitrosoglutathione + NADH + H(+) = S-(hydroxysulfenamide)glutathione + NAD(+). Functionally, oxidizes long-chain alcohols and, in the presence of glutathione, is able to oxidize formaldehyde. Is responsible for yeast resistance to formaldehyde. Also acts as a S-nitroso-glutathione reductase by catalyzing the NADH-dependent reduction of S-nitrosoglutathione, thereby regulating protein S-nitrosylation. The sequence is that of S-(hydroxymethyl)glutathione dehydrogenase (SFA1) from Saccharomyces cerevisiae (strain ATCC 204508 / S288c) (Baker's yeast).